A 602-amino-acid polypeptide reads, in one-letter code: ATP-dependent lipid A-core flippase 1 (602 aa).

A run of 5 helical transmembrane segments spans residues 36–56 (LGFV…VYFL), 80–100 (LFII…NYCL), 154–174 (ILTI…MFYY), 176–196 (WQLS…VSVV), and 261–281 (ASVP…FYAI). Residues 39–321 (VAAIIGMLGY…LTNVNSEFQQ (283 aa)) enclose the ABC transmembrane type-1 domain. The ABC transporter domain occupies 362-599 (YKNTNTMTTS…QGAYAQLHSF (238 aa)). Residue 398-405 (GRSGSGKS) participates in ATP binding.

It belongs to the ABC transporter superfamily. Lipid exporter (TC 3.A.1.106) family. As to quaternary structure, homodimer.

The protein localises to the cell inner membrane. It carries out the reaction ATP + H2O + lipid A-core oligosaccharideSide 1 = ADP + phosphate + lipid A-core oligosaccharideSide 2.. Its function is as follows. Involved in lipopolysaccharide (LPS) biosynthesis. Translocates lipid A-core from the inner to the outer leaflet of the inner membrane. Transmembrane domains (TMD) form a pore in the inner membrane and the ATP-binding domain (NBD) is responsible for energy generation. This Colwellia psychrerythraea (strain 34H / ATCC BAA-681) (Vibrio psychroerythus) protein is ATP-dependent lipid A-core flippase 1.